We begin with the raw amino-acid sequence, 493 residues long: Glutamate--tRNA ligase (493 aa).

The short motif at 10–20 (PSPTGDPHVGT) is the 'HIGH' region element. The 'KMSKS' region signature appears at 251 to 255 (KLSKR). Lys254 is a binding site for ATP.

This sequence belongs to the class-I aminoacyl-tRNA synthetase family. Glutamate--tRNA ligase type 1 subfamily. In terms of assembly, monomer.

The protein localises to the cytoplasm. It carries out the reaction tRNA(Glu) + L-glutamate + ATP = L-glutamyl-tRNA(Glu) + AMP + diphosphate. Functionally, catalyzes the attachment of glutamate to tRNA(Glu) in a two-step reaction: glutamate is first activated by ATP to form Glu-AMP and then transferred to the acceptor end of tRNA(Glu). The polypeptide is Glutamate--tRNA ligase (Pseudomonas putida (strain ATCC 700007 / DSM 6899 / JCM 31910 / BCRC 17059 / LMG 24140 / F1)).